A 390-amino-acid polypeptide reads, in one-letter code: Putative transposase y4qE (390 aa).

Belongs to the transposase IS1111A/IS1328/IS1533 family.

The chain is Putative transposase y4qE from Sinorhizobium fredii (strain NBRC 101917 / NGR234).